A 297-amino-acid polypeptide reads, in one-letter code: Transmembrane protein 169 (297 aa).

Residues 1-85 (MEEPTAVEGQ…KEEEGDDFLD (85 aa)) form a disordered region. Over 1 to 159 (MEEPTAVEGQ…CQMGADRGPH (159 aa)) the chain is Extracellular. The span at 61 to 85 (KTDEEPGESEGGDQPKEEEGDDFLD) shows a compositional bias: acidic residues. Residues 160 to 180 (VVLWTLICLPVVFILSFVVSF) form a helical membrane-spanning segment. Residues 181 to 210 (YYGTITWYNIFLVYNEERTFWHKISYCPCL) are Cytoplasmic-facing. A helical membrane pass occupies residues 211-231 (VLFYPVLIMAMASSLGLYAAV). At 232–297 (VQLSWSWEAW…PIQEVETSTV (66 aa)) the chain is on the extracellular side.

Its subcellular location is the membrane. The polypeptide is Transmembrane protein 169 (TMEM169) (Homo sapiens (Human)).